The chain runs to 794 residues: DNA mismatch repair protein pms1 (794 aa).

Disordered regions lie at residues 351–384 (SQIP…SFSY) and 409–442 (GASL…TASS). A compositionally biased stretch (polar residues) spans 352–371 (QIPDSSGDSTDQELPQSIPA). A compositionally biased stretch (basic and acidic residues) spans 419–429 (LPERLQKDSMR). The segment covering 430-442 (RSSPLNEKVTASS) has biased composition (polar residues).

This sequence belongs to the DNA mismatch repair MutL/HexB family.

Functionally, this protein is involved in the repair of mismatches in DNA. The sequence is that of DNA mismatch repair protein pms1 (pms1) from Schizosaccharomyces pombe (strain 972 / ATCC 24843) (Fission yeast).